The primary structure comprises 104 residues: Enhancer of rudimentary homolog (104 aa).

At serine 2 the chain carries N-acetylserine. A Phosphothreonine modification is found at threonine 11. Lysine 12 is covalently cross-linked (Glycyl lysine isopeptide (Lys-Gly) (interchain with G-Cter in SUMO2)).

The protein belongs to the E(R) family. Homodimer.

Its subcellular location is the nucleus. May have a role in the cell cycle. In Bos taurus (Bovine), this protein is Enhancer of rudimentary homolog (ERH).